The chain runs to 283 residues: Glutamyl-Q tRNA(Asp) synthetase (283 aa).

L-glutamate-binding positions include 5–9 and Glu-41; that span reads RFAPT. A 'HIGH' region motif is present at residues 8-18; it reads PTPSGPLHLGS. The Zn(2+) site is built by Cys-97, Cys-99, Tyr-111, and Cys-115. Positions 168 and 186 each coordinate L-glutamate. Positions 224–228 match the 'KMSKS' region motif; that stretch reads KLSKQ. Lys-227 lines the ATP pocket.

This sequence belongs to the class-I aminoacyl-tRNA synthetase family. GluQ subfamily. Requires Zn(2+) as cofactor.

Its function is as follows. Catalyzes the tRNA-independent activation of glutamate in presence of ATP and the subsequent transfer of glutamate onto a tRNA(Asp). Glutamate is transferred on the 2-amino-5-(4,5-dihydroxy-2-cyclopenten-1-yl) moiety of the queuosine in the wobble position of the QUC anticodon. The sequence is that of Glutamyl-Q tRNA(Asp) synthetase from Idiomarina loihiensis (strain ATCC BAA-735 / DSM 15497 / L2-TR).